The primary structure comprises 351 residues: Snurportin-1 (351 aa).

Disordered regions lie at residues 1–66 (MESS…QKGI) and 294–322 (EQKK…EYDS). Positions 8–42 (LYKKGLDIGEQQKQRQKELLKQQKLRRQQEQDDYR) are enriched in basic and acidic residues. Positions 52 to 62 (PRKKSGKRSGH) are enriched in basic residues. Residues 274-330 (VLQYMDAFEQKLAEHRRTLKEQKKKVNEQKEDPHTMEAEEDVESDEYDSLKRVLDQQ) adopt a coiled-coil conformation. Positions 294–310 (EQKKKVNEQKEDPHTME) are enriched in basic and acidic residues. A compositionally biased stretch (acidic residues) spans 311–320 (AEEDVESDEY).

Belongs to the snurportin family. Interacts with components of the snRNP complex including SmB and Smn; these interactions are RNA-dependent. Interacts with importin-7 msk but not with importin subunit beta Fs(2)Ket; the interaction is RNA-dependent.

It localises to the nucleus. Its subcellular location is the cytoplasm. It is found in the U-body. The protein resides in the nucleus speckle. The protein localises to the cajal body. Functionally, functions as an U snRNP-specific nuclear import adapter. Involved in the trimethylguanosine (m3G)-cap-dependent nuclear import of U snRNPs. Binds specifically to the terminal m3G-cap U snRNAs. The protein is Snurportin-1 of Drosophila melanogaster (Fruit fly).